Consider the following 262-residue polypeptide: Fibroin light chain (262 aa).

The N-terminal stretch at 1–16 (MKPIFLVLLVATSAYA) is a signal peptide. S19 carries the post-translational modification N-acetylserine; in short form. C101 and C160 are joined by a disulfide.

As to quaternary structure, silk fibroin elementary unit consists in a disulfide-linked heavy and light chain and a p25 glycoprotein in molar ratios of 6:6:1. This results in a complex of approximately 2.3 MDa. The interchain disulfide bridge is essential for the intracellular transport and secretion of fibroin. Post-translationally, partially N-terminally processed to yield a short form which lacks the first two residues of the long form. In terms of tissue distribution, produced exclusively in the posterior (PSG) section of silk glands, which are essentially modified salivary glands.

Its subcellular location is the secreted. In terms of biological role, it is likely that the major role of L-chain is to prevent the retention of H-chain in ER by forming the disulfide linkage. The polypeptide is Fibroin light chain (FIBL) (Bombyx mori (Silk moth)).